The chain runs to 44 residues: Phosphatase RapA inhibitor (44 aa).

A propeptide spanning residues 1–39 (MKSKWMSGLLLVAVGFSFTQVMVHAGETANTEGKTFHIA) is cleaved from the precursor.

Belongs to the Phr family. As to quaternary structure, interacts with RapA and inhibits its interaction with Spo0F. In terms of processing, secreted with a propeptide domain, which is cleaved in the cell wall by the secreted serine proteases subtilisin and Vpr to produce a mature signaling peptide. Contains a predicted signal peptide cleavage site in the N-terminal region, however the propeptide is probably subject to only one processing event, at the N-terminal end of the mature peptide.

The protein resides in the secreted. The protein localises to the cytoplasm. Its activity is regulated as follows. Inhibition of RapA requires a free carboxylate group at the C-terminal end of the PhrA pentapeptide. A free C-terminal carboxylic acid PhrA pentapeptide inhibits RapA phosphatase activity at a 1:1 ratio and is approximately 200 fold more active than a C-terminal amide peptide. Functionally, signaling molecule involved in the regulation of sporulation. Secreted during production, but the mature peptide acts intracellularly, indicating that it needs to be imported into the cell to function. Inhibitor of the RapA phosphatase activity. Does not act on RapB. The protein is Phosphatase RapA inhibitor of Bacillus subtilis (strain 168).